A 516-amino-acid polypeptide reads, in one-letter code: MNALSEQILFELRHLLSEMSDGGSVGPSVYDTARALQFGGNVTGRQDAYAWLLAQQQADGGWGSADFPLFRHAPTWAALLALQRADPLPGAADAVQAATRFLERQADPYAHAVPEDAPIGAELILPQLCGEAASLLGGVAFPRHPALLPLRQACLVKLGAVATLPSGHPLLHSWEAWGTWPTAACPDDDGSIGISPAATAAWRAHAVTQGSTPQVGRADAYLQAASRATRSGIEGVVPNVWPINVFEPCWSLYTLHLAGLFAHPALDEAVRVIVAQLDARLGVRGLGPALHFAADADDTAVALCVLRLAGRDPAVDALRHFEIGELFVTFPGERNASVSTNIHALHALRLLGKPAAGTSAYVEANRNPHGLWDNEKWHVSWLYPTAHAVAALAQGKPQWRDERALAALLQAQRDDGGWGAGRASTFEETAYALFALHVMDGSEEPTGRRRIAQAVARALEWMLARHAAPALPQMPLWIGKELYCPIRVVRVAELAGLWLALRWGPRVPAEGAGAAP.

PFTB repeat units follow at residues 45–86 (RQDA…QRAD) and 401–443 (DERA…DGSE).

This is an uncharacterized protein from Sinorhizobium fredii (strain NBRC 101917 / NGR234).